Consider the following 70-residue polypeptide: DNA-directed RNA polymerase subunit epsilon (70 aa).

The protein belongs to the RNA polymerase subunit epsilon family. RNAP is composed of a core of 2 alpha, a beta and a beta' subunit. The core is associated with a delta subunit, and at least one of epsilon or omega. When a sigma factor is associated with the core the holoenzyme is formed, which can initiate transcription.

It catalyses the reaction RNA(n) + a ribonucleoside 5'-triphosphate = RNA(n+1) + diphosphate. Functionally, a non-essential component of RNA polymerase (RNAP). In Limosilactobacillus reuteri (strain DSM 20016) (Lactobacillus reuteri), this protein is DNA-directed RNA polymerase subunit epsilon.